Consider the following 238-residue polypeptide: MEFQHIDLNQTHIRLTTDLKNNNLEKYILNLRKELEHYITKNKDFQLSLEPVNHDEEDLSEIIKRMYTASSYCDVGPMACVAGCISEMSLDYLISKKSEYSIIENGGDIAIVNNKKAVCGIYSNNPILGNKIGFELKARKTPLGICTSSGKIGHSISFGYADSVTVLSKKASVADGLATKIANEAVGQNSEYKVSNALEASENYKDLFEGVLIISQDNVGSIGKLPKIVETEEFNVKM.

This sequence belongs to the UPF0280 family.

The sequence is that of UPF0280 protein Msm_0088 from Methanobrevibacter smithii (strain ATCC 35061 / DSM 861 / OCM 144 / PS).